Here is a 155-residue protein sequence, read N- to C-terminus: Probable methanogenesis regulatory protein FilR2 (155 aa).

Residues 18-142 (IILLVEDNNA…DLKRTVEEIK (125 aa)) enclose the Response regulatory domain. Aspartate 75 is subject to 4-aspartylphosphate.

Post-translationally, phosphorylated by FilI.

Its function is as follows. Member of the two-component regulatory system FilI/FilRs, which is involved in the regulation of methanogenesis. This is Probable methanogenesis regulatory protein FilR2 from Methanothrix harundinacea (strain 6Ac) (Methanosaeta harundinacea).